Reading from the N-terminus, the 603-residue chain is Elongation factor 4 (603 aa).

The region spanning 2–184 (NHIRNFSIIA…AVVARMPPPR (183 aa)) is the tr-type G domain. Residues 14–19 (DHGKST) and 131–134 (NKMD) contribute to the GTP site.

It belongs to the TRAFAC class translation factor GTPase superfamily. Classic translation factor GTPase family. LepA subfamily.

The protein localises to the cell inner membrane. It catalyses the reaction GTP + H2O = GDP + phosphate + H(+). Its function is as follows. Required for accurate and efficient protein synthesis under certain stress conditions. May act as a fidelity factor of the translation reaction, by catalyzing a one-codon backward translocation of tRNAs on improperly translocated ribosomes. Back-translocation proceeds from a post-translocation (POST) complex to a pre-translocation (PRE) complex, thus giving elongation factor G a second chance to translocate the tRNAs correctly. Binds to ribosomes in a GTP-dependent manner. This Albidiferax ferrireducens (strain ATCC BAA-621 / DSM 15236 / T118) (Rhodoferax ferrireducens) protein is Elongation factor 4.